The chain runs to 465 residues: Glutamate--tRNA ligase 1 (465 aa).

The 'HIGH' region motif lies at P8 to G18. Positions K236–R240 match the 'KMSKS' region motif. K239 is a binding site for ATP.

Belongs to the class-I aminoacyl-tRNA synthetase family. Glutamate--tRNA ligase type 1 subfamily. In terms of assembly, monomer.

It localises to the cytoplasm. It catalyses the reaction tRNA(Glu) + L-glutamate + ATP = L-glutamyl-tRNA(Glu) + AMP + diphosphate. Its function is as follows. Catalyzes the attachment of glutamate to tRNA(Glu) in a two-step reaction: glutamate is first activated by ATP to form Glu-AMP and then transferred to the acceptor end of tRNA(Glu). This Wolinella succinogenes (strain ATCC 29543 / DSM 1740 / CCUG 13145 / JCM 31913 / LMG 7466 / NCTC 11488 / FDC 602W) (Vibrio succinogenes) protein is Glutamate--tRNA ligase 1.